The chain runs to 740 residues: 1,4-alpha-glucan branching enzyme GlgB (740 aa).

The active-site Nucleophile is aspartate 414. Glutamate 467 (proton donor) is an active-site residue.

This sequence belongs to the glycosyl hydrolase 13 family. GlgB subfamily. As to quaternary structure, monomer.

It catalyses the reaction Transfers a segment of a (1-&gt;4)-alpha-D-glucan chain to a primary hydroxy group in a similar glucan chain.. The protein operates within glycan biosynthesis; glycogen biosynthesis. In terms of biological role, catalyzes the formation of the alpha-1,6-glucosidic linkages in glycogen by scission of a 1,4-alpha-linked oligosaccharide from growing alpha-1,4-glucan chains and the subsequent attachment of the oligosaccharide to the alpha-1,6 position. The sequence is that of 1,4-alpha-glucan branching enzyme GlgB from Rhodospirillum rubrum (strain ATCC 11170 / ATH 1.1.1 / DSM 467 / LMG 4362 / NCIMB 8255 / S1).